Here is a 338-residue protein sequence, read N- to C-terminus: Aspartate carbamoyltransferase catalytic subunit (338 aa).

Residues R72 and T73 each contribute to the carbamoyl phosphate site. K100 lines the L-aspartate pocket. The carbamoyl phosphate site is built by R122, H152, and Q155. Residues R186 and R243 each contribute to the L-aspartate site. Carbamoyl phosphate contacts are provided by G284 and P285.

It belongs to the aspartate/ornithine carbamoyltransferase superfamily. ATCase family. In terms of assembly, heterododecamer (2C3:3R2) of six catalytic PyrB chains organized as two trimers (C3), and six regulatory PyrI chains organized as three dimers (R2).

It catalyses the reaction carbamoyl phosphate + L-aspartate = N-carbamoyl-L-aspartate + phosphate + H(+). Its pathway is pyrimidine metabolism; UMP biosynthesis via de novo pathway; (S)-dihydroorotate from bicarbonate: step 2/3. Catalyzes the condensation of carbamoyl phosphate and aspartate to form carbamoyl aspartate and inorganic phosphate, the committed step in the de novo pyrimidine nucleotide biosynthesis pathway. This chain is Aspartate carbamoyltransferase catalytic subunit, found in Acinetobacter baumannii (strain ACICU).